The following is a 290-amino-acid chain: MKITASLVKKLRQRMGAGMMDCKKALNATNGNIEKAIDLMRTLNTTKSAKKLDRITIEGLVKINISANKKTVTILEVNSETDFVTKSDTFISFVNMLGVLALKTTPTNIEEFLSQPLSNGDSIEKAREEIIAKVGENITIRRVQTIKTNNGIIGTYKHMDRIAVVTILEKGDETLAKDIAMHIAATNPECITEAELSSDLLEREKAIFIEQSKKSGKPNNIIEKMIIGRMKKFVNGVTLYGQPFIKNHDTTIGKLMQLNNTQVKFFVRFEVGEGIEKKEKNFVDEVMAQI.

The tract at residues 81 to 84 (TDFV) is involved in Mg(2+) ion dislocation from EF-Tu.

Belongs to the EF-Ts family.

The protein resides in the cytoplasm. Its function is as follows. Associates with the EF-Tu.GDP complex and induces the exchange of GDP to GTP. It remains bound to the aminoacyl-tRNA.EF-Tu.GTP complex up to the GTP hydrolysis stage on the ribosome. The protein is Elongation factor Ts of Vesicomyosocius okutanii subsp. Calyptogena okutanii (strain HA).